The sequence spans 546 residues: Phosphoglucomutase (546 aa).

S135 acts as the Phosphoserine intermediate in catalysis. The Mg(2+) site is built by S135, D288, D290, and D292.

Belongs to the phosphohexose mutase family. Mg(2+) serves as cofactor.

It catalyses the reaction alpha-D-glucose 1-phosphate = alpha-D-glucose 6-phosphate. It participates in glycolipid metabolism; diglucosyl-diacylglycerol biosynthesis. Its function is as follows. Catalyzes the interconversion between glucose-6-phosphate and alpha-glucose-1-phosphate. This is the first step in the biosynthesis of diglucosyl-diacylglycerol (Glc2-DAG), i.e. a glycolipid found in the membrane, which is also used as a membrane anchor for lipoteichoic acid (LTA). The polypeptide is Phosphoglucomutase (pgcA) (Staphylococcus epidermidis (strain ATCC 12228 / FDA PCI 1200)).